Consider the following 222-residue polypeptide: Cytochrome b6 (222 aa).

The helical transmembrane segment at 39 to 59 (IFYCLGGITLTCFLIQFATGF) threads the bilayer. Position 42 (Cys-42) interacts with heme c. Heme b is bound by residues His-93 and His-107. 3 helical membrane passes run 97–117 (ASMM…TGGF), 123–143 (LTWV…VTGY), and 193–213 (LHTF…FLMI). Residues His-194 and His-209 each coordinate heme b.

This sequence belongs to the cytochrome b family. PetB subfamily. The 4 large subunits of the cytochrome b6-f complex are cytochrome b6, subunit IV (17 kDa polypeptide, PetD), cytochrome f and the Rieske protein, while the 4 small subunits are PetG, PetL, PetM and PetN. The complex functions as a dimer. It depends on heme b as a cofactor. Requires heme c as cofactor.

The protein resides in the cellular thylakoid membrane. Its function is as follows. Component of the cytochrome b6-f complex, which mediates electron transfer between photosystem II (PSII) and photosystem I (PSI), cyclic electron flow around PSI, and state transitions. The sequence is that of Cytochrome b6 from Cyanothece sp. (strain PCC 7425 / ATCC 29141).